The primary structure comprises 776 residues: Isoamylase (776 aa).

An N-terminal signal peptide occupies residues 1–26; it reads MKCPKILAALLGCAVLAGVPAMPAHA. Ca(2+)-binding residues include D154, E255, T256, N258, and D285. The active-site Nucleophile is the D401. A disulfide bond links C410 and C422. E461 functions as the Proton donor in the catalytic mechanism. 2 disulfide bridges follow: C546-C616 and C738-C766.

This sequence belongs to the glycosyl hydrolase 13 family. In terms of assembly, monomer. Ca(2+) is required as a cofactor.

The enzyme catalyses Hydrolysis of (1-&gt;6)-alpha-D-glucosidic branch linkages in glycogen, amylopectin and their beta-limit dextrins.. The polypeptide is Isoamylase (iam) (Pseudomonas sp. (strain SMP1)).